The sequence spans 466 residues: Myocardial zonula adherens protein (466 aa).

Residues 1–10 (MLRSTSTVTL) show a composition bias toward polar residues. Positions 1–16 (MLRSTSTVTLFSGGGA) are cleaved as a signal peptide. The tract at residues 1 to 68 (MLRSTSTVTL…SNGESTKRLP (68 aa)) is disordered. The span at 45-55 (TEKKIERKDQP) shows a compositional bias: basic and acidic residues. 2 coiled-coil regions span residues 95 to 137 (NQLK…QDLS) and 187 to 415 (HIKD…LTET).

Belongs to the MYZAP family. Interacts with DSP, MPRIP and TJP1/ZO1. Interaction with MPRIP inhibits the activation of transcription factor SRF. Interacts with GRIN1. Interacts with DYNLL1. Detected in heart myocardium and lung.

It is found in the cytoplasm. The protein localises to the cytoskeleton. The protein resides in the cell membrane. It localises to the myofibril. Its subcellular location is the sarcomere. It is found in the i band. The protein localises to the z line. The protein resides in the cell junction. In terms of biological role, plays a role in cellular signaling via Rho-related GTP-binding proteins and activation of transcription factor SRF. Targets TJP1 to cell junctions. In cortical neurons, may play a role in glutaminergic signal transduction through interaction with the NMDA receptor subunit GRIN1. The sequence is that of Myocardial zonula adherens protein (Myzap) from Mus musculus (Mouse).